A 208-amino-acid polypeptide reads, in one-letter code: Small ribosomal subunit protein uS4 (208 aa).

In terms of domain architecture, S4 RNA-binding spans 98–160; that stretch reads SRLDNVAYNM…AKSYLRIKSS (63 aa).

Belongs to the universal ribosomal protein uS4 family. As to quaternary structure, part of the 30S ribosomal subunit. Contacts protein S5. The interaction surface between S4 and S5 is involved in control of translational fidelity.

In terms of biological role, one of the primary rRNA binding proteins, it binds directly to 16S rRNA where it nucleates assembly of the body of the 30S subunit. Functionally, with S5 and S12 plays an important role in translational accuracy. This is Small ribosomal subunit protein uS4 from Nitrosomonas eutropha (strain DSM 101675 / C91 / Nm57).